Consider the following 132-residue polypeptide: Dinoflagellate viral nucleoprotein 5 (132 aa).

A compositionally biased stretch (basic residues) spans 1–44 (MAAMKKAMKVKKSAKKSAKKSGKKGGMKKKAKRVSKVARGKRAK). Positions 1–84 (MAAMKKAMKV…KKQSEHGKKI (84 aa)) are disordered. Polar residues predominate over residues 57 to 66 (GGLTKNSLVK).

In terms of processing, phosphorylated.

It localises to the nucleus. The protein localises to the chromosome. Functionally, DNA-binding protein, which similarly to histones, may compact DNA into chromatin. In Hematodinium sp, this protein is Dinoflagellate viral nucleoprotein 5.